The primary structure comprises 107 residues: Protein HitA (107 aa).

The HIT domain maps to 5-107 (IFCKIAAKEI…LHIHIMGTPV (103 aa)). The Histidine triad motif signature appears at 97 to 101 (HLHIH).

The sequence is that of Protein HitA (hitA) from Neisseria gonorrhoeae.